The chain runs to 505 residues: ATP synthase subunit alpha (505 aa).

Residue 170-177 (GDRQTGKT) coordinates ATP.

This sequence belongs to the ATPase alpha/beta chains family. As to quaternary structure, F-type ATPases have 2 components, CF(1) - the catalytic core - and CF(0) - the membrane proton channel. CF(1) has five subunits: alpha(3), beta(3), gamma(1), delta(1), epsilon(1). CF(0) has four main subunits: a(1), b(1), b'(1) and c(9-12).

The protein localises to the cellular thylakoid membrane. It carries out the reaction ATP + H2O + 4 H(+)(in) = ADP + phosphate + 5 H(+)(out). In terms of biological role, produces ATP from ADP in the presence of a proton gradient across the membrane. The alpha chain is a regulatory subunit. The sequence is that of ATP synthase subunit alpha from Synechococcus elongatus (strain ATCC 33912 / PCC 7942 / FACHB-805) (Anacystis nidulans R2).